The following is a 392-amino-acid chain: Selenide, water dikinase 1 (392 aa).

Ser2 is subject to N-acetylserine. The active site involves Cys31. Residues Lys32, 67 to 69 (GMD), Asp87, Asp110, and 161 to 164 (GGQT) contribute to the ATP site. A Mg(2+)-binding site is contributed by Asp69. Mg(2+) is bound at residue Asp110. Asp265 is a Mg(2+) binding site.

The protein belongs to the selenophosphate synthase 1 family. Class II subfamily. As to quaternary structure, homodimer. Heterodimer with isoform 3. Homodimer. Heterodimer with isoform 4. In terms of assembly, homodimer. Heterodimer with isoform 1. As to quaternary structure, homodimer. Heterodimer with isoform 2. Mg(2+) serves as cofactor. As to expression, gradually expressed during the cell cycle until G2/M phase and then decreases. In terms of tissue distribution, gradually expressed during the cell cycle until S phase and then decreases.

The protein resides in the cell membrane. The protein localises to the nucleus membrane. Its subcellular location is the cytoplasm. The enzyme catalyses hydrogenselenide + ATP + H2O = selenophosphate + AMP + phosphate + 2 H(+). With respect to regulation, activated by phosphate ions and by potassium ions. In terms of biological role, synthesizes selenophosphate from selenide and ATP. This chain is Selenide, water dikinase 1 (SEPHS1), found in Homo sapiens (Human).